Here is a 273-residue protein sequence, read N- to C-terminus: Protein BMH2 (273 aa).

N-acetylserine is present on Ser-2. Residues 236–273 (DISESGQEDQQQQQQQQQQQQQQQQQAPAEQTQGEPTK) are disordered. Residues 245 to 261 (QQQQQQQQQQQQQQQQQ) show a composition bias toward low complexity. The span at 262-273 (APAEQTQGEPTK) shows a compositional bias: polar residues.

It belongs to the 14-3-3 family. Interacts with NTH1 (via N-terminus when phosphorylated by PKA); the interaction is direct and activates NTH1. Interacts with FIN1.

It is found in the cytoplasm. The protein localises to the nucleus. The protein is Protein BMH2 (BMH2) of Saccharomyces cerevisiae (strain ATCC 204508 / S288c) (Baker's yeast).